A 372-amino-acid polypeptide reads, in one-letter code: NAD(P)H-quinone oxidoreductase subunit 1 (372 aa).

The next 9 membrane-spanning stretches (helical) occupy residues 27-47 (AIWM…GVLV), 65-85 (PEYI…KLVF), 97-117 (WLFT…YLIV), 128-148 (IGTG…GLLM), 166-186 (AAQS…IVMM), 204-224 (ILGW…IAAL), 266-286 (VLSA…PIPI), 308-328 (ALGI…AILL), and 347-367 (FLLP…LAFP).

It belongs to the complex I subunit 1 family. NDH-1 is composed of at least 11 different subunits.

It is found in the cellular thylakoid membrane. It catalyses the reaction a plastoquinone + NADH + (n+1) H(+)(in) = a plastoquinol + NAD(+) + n H(+)(out). It carries out the reaction a plastoquinone + NADPH + (n+1) H(+)(in) = a plastoquinol + NADP(+) + n H(+)(out). In terms of biological role, NDH-1 shuttles electrons from an unknown electron donor, via FMN and iron-sulfur (Fe-S) centers, to quinones in the respiratory and/or the photosynthetic chain. The immediate electron acceptor for the enzyme in this species is believed to be plastoquinone. Couples the redox reaction to proton translocation, and thus conserves the redox energy in a proton gradient. This is NAD(P)H-quinone oxidoreductase subunit 1 from Trichormus variabilis (strain ATCC 29413 / PCC 7937) (Anabaena variabilis).